The chain runs to 100 residues: Large ribosomal subunit protein uL23 (100 aa).

The protein belongs to the universal ribosomal protein uL23 family. Part of the 50S ribosomal subunit. Contacts protein L29, and trigger factor when it is bound to the ribosome.

Its function is as follows. One of the early assembly proteins it binds 23S rRNA. One of the proteins that surrounds the polypeptide exit tunnel on the outside of the ribosome. Forms the main docking site for trigger factor binding to the ribosome. This is Large ribosomal subunit protein uL23 from Pasteurella multocida (strain Pm70).